The primary structure comprises 243 residues: UPF0758 protein Ava_0172 (243 aa).

In terms of domain architecture, MPN spans 113–235 (PIDSPVAAVA…HQSLREVTTL (123 aa)). Zn(2+) contacts are provided by His184, His186, and Asp197. The short motif at 184–197 (HNHPSGNVEPSPED) is the JAMM motif element.

This sequence belongs to the UPF0758 family.

This chain is UPF0758 protein Ava_0172, found in Trichormus variabilis (strain ATCC 29413 / PCC 7937) (Anabaena variabilis).